Here is a 1349-residue protein sequence, read N- to C-terminus: Periaxin (1349 aa).

Position 7 is a phosphoserine (S7). One can recognise a PDZ domain in the interval 16–99 (LVEIIVETEA…YKVSFCLKRT (84 aa)). The Nuclear export signal motif lies at 70 to 84 (VFFENFKYEDALRLL). A Phosphoserine modification is found at S133. Repeat copies occupy residues 402–406 (PPEVK), 410–414 (GPEVK), 418–422 (VPEVK), 426–430 (MPEPV), 431–435 (LPEVR), 436–440 (LPEVE), 444–448 (VSEMK), 452–456 (VPEMA), 457–461 (VPEVR), 462–466 (LPEVQ), 467–471 (LPKVP), 472–476 (EMKLP), 477–481 (EVKLP), 485–489 (EMAVP), 493–497 (LPEVQ), 501–505 (VPEMK), 506–510 (LPEVK), 514–518 (VPEMA), 519–523 (VPEVR), 524–528 (LPEVQ), 532–536 (VPEMK), 537–549 (LPKV…PEMK), 553–557 (VPEMA), 558–562 (VPEVR), 563–567 (LPEVQ), 571–575 (VPEVK), 576–580 (LPEVK), 589–593 (VPEMA), 594–598 (VPEVH), 599–603 (LPEVQ), 612–616 (VPDVK), 617–621 (LPEVK), 622–626 (LPEIK), 630–634 (VPEMV), 635–639 (VPDVH), 643–647 (VHLPK), 648–652 (VSEMR), 653–657 (LPEVQ), 661–665 (VPEVH), 669–673 (APEVK), and 674–678 (LPKAP). Positions 402-678 (PPEVKVPKGP…APEVKLPKAP (277 aa)) are 41 X 5 AA approximate tandem repeats of [LVMGIE]-[PSM]-[EDKA]-[LIVMA]-[AQKHPRT]; that may have a tripeptide spacer of [ALKD]-[IPV]-[KPH]. A phosphoserine mark is found at S794 and S974. Positions 1207 to 1218 (AKEGAEEGEKAK) are enriched in basic and acidic residues. The tract at residues 1207 to 1349 (AKEGAEEGEK…RMEGAQAAVI (143 aa)) is disordered. Positions 1232 to 1242 (SEAVSGEGSPS) are enriched in low complexity. Phosphoserine occurs at positions 1236, 1240, 1242, 1289, 1295, and 1327.

The protein belongs to the periaxin family. Homodimer (via PDZ domain). Interacts with SCN10A. Found in a complex with SCN10A. Interacts with DRP2. Identified in a dystroglycan complex that contains at least PRX, DRP2, UTRN, DMD and DAG1. Detected in a complex composed of at least EZR, AHNAK, PPL and PRX. Identified in a complex with EZR, AHNAK, BFSP1, BFSP2, ANK2, PLEC, VIM and spectrin. In terms of tissue distribution, detected in eye lens (at protein level).

The protein resides in the nucleus. It is found in the cytoplasm. The protein localises to the cell membrane. Its subcellular location is the cell junction. It localises to the adherens junction. Its function is as follows. Scaffolding protein that functions as part of a dystroglycan complex in Schwann cells, and as part of EZR and AHNAK-containing complexes in eye lens fiber cells. Required for the maintenance of the peripheral myelin sheath that is essential for normal transmission of nerve impulses and normal perception of sensory stimuli. Required for normal transport of MBP mRNA from the perinuclear to the paranodal regions. Required for normal remyelination after nerve injury. Required for normal elongation of Schwann cells and normal length of the internodes between the nodes of Ranvier. The demyelinated nodes of Ranvier permit saltatory transmission of nerve impulses; shorter internodes cause slower transmission of nerve impulses. Required for the formation of appositions between the abaxonal surface of the myelin sheath and the Schwann cell plasma membrane; the Schwann cell cytoplasm is restricted to regions between these appositions. Required for the formation of Cajal bands and of Schmidt-Lanterman incisures that correspond to short, cytoplasm-filled regions on myelinated nerves. Recruits DRP2 to the Schwann cell plasma membrane. Required for normal protein composition of the eye lens fiber cell plasma membrane and normal eye lens fiber cell morphology. The protein is Periaxin (PRX) of Bos taurus (Bovine).